We begin with the raw amino-acid sequence, 475 residues long: Aspartyl/glutamyl-tRNA(Asn/Gln) amidotransferase subunit B (475 aa).

This sequence belongs to the GatB/GatE family. GatB subfamily. In terms of assembly, heterotrimer of A, B and C subunits.

It catalyses the reaction L-glutamyl-tRNA(Gln) + L-glutamine + ATP + H2O = L-glutaminyl-tRNA(Gln) + L-glutamate + ADP + phosphate + H(+). The catalysed reaction is L-aspartyl-tRNA(Asn) + L-glutamine + ATP + H2O = L-asparaginyl-tRNA(Asn) + L-glutamate + ADP + phosphate + 2 H(+). Functionally, allows the formation of correctly charged Asn-tRNA(Asn) or Gln-tRNA(Gln) through the transamidation of misacylated Asp-tRNA(Asn) or Glu-tRNA(Gln) in organisms which lack either or both of asparaginyl-tRNA or glutaminyl-tRNA synthetases. The reaction takes place in the presence of glutamine and ATP through an activated phospho-Asp-tRNA(Asn) or phospho-Glu-tRNA(Gln). The sequence is that of Aspartyl/glutamyl-tRNA(Asn/Gln) amidotransferase subunit B from Chlorobium chlorochromatii (strain CaD3).